An 881-amino-acid chain; its full sequence is Putative cation exchanger C521.04c (881 aa).

Residues Met1 to Gln19 show a composition bias toward polar residues. Disordered stretches follow at residues Met1–Leu39 and Ala52–Glu142. A compositionally biased stretch (basic and acidic residues) spans Asn63–Thr77. Residues Arg83–Arg95 are compositionally biased toward polar residues. Residues Arg99–Arg113 show a composition bias toward low complexity. Ser129 carries the phosphoserine modification. 8 consecutive transmembrane segments (helical) span residues Ile200–Phe220, Leu329–Val349, Ile407–Phe427, Val438–Ala458, Gly471–Leu491, Ile504–Ile524, Gly537–Phe557, and Leu594–Phe614. Positions Val641 to Pro717 are disordered. Over residues Asn646–Ser657 the composition is skewed to polar residues. Residues Ser678 to Asn688 are compositionally biased toward low complexity. A run of 5 helical transmembrane segments spans residues Ile726–Val746, Leu762–Leu782, Ser794–Phe814, Leu828–Leu848, and Tyr859–Phe879.

Belongs to the Ca(2+):cation antiporter (CaCA) (TC 2.A.19) family.

The protein resides in the endoplasmic reticulum membrane. Putative cation exchanger. This Schizosaccharomyces pombe (strain 972 / ATCC 24843) (Fission yeast) protein is Putative cation exchanger C521.04c.